Here is a 206-residue protein sequence, read N- to C-terminus: MQRFLVFTIVAVATAAAGDIFYPGYCPDVKPVDDFDLSAFAGAWHEIAKLPLENENQGKCTIAEYKYDGKKASVYNSFVVNGVKEYMEGDLEIAPDAKYTKQGKYVMTFKFGQRVVNLVPWVLATDYKNYAINYNCNYHPDKKAHSIHAWILSKSKVLEGNTKEVVDNVLKTFSHLIDASKFISNDFSEAACQYSTTYSLTGPDRH.

Residues 1-17 form the signal peptide; the sequence is MQRFLVFTIVAVATAAA. Cystine bridges form between Cys26–Cys136 and Cys60–Cys192.

This sequence belongs to the calycin superfamily. Lipocalin family. As to quaternary structure, homotetramer. In terms of tissue distribution, synthesized only in the caterpillars, apparently by the epidermis and secreted into the hemolymph. The protein is passed over from the larval hemolymph to that of pupae and adults and is sequestered in the eggs.

It is found in the secreted. Functionally, this protein binds a chromophore: biliverdin IX, isomer gamma. Mixed with lipoprotein-bound carotenes, this blue protein provides hornworms with their green cryptic coloration which serves a camouflage. In Manduca sexta (Tobacco hawkmoth), this protein is Insecticyanin-B (INSB).